Here is a 284-residue protein sequence, read N- to C-terminus: 2-dehydro-3-deoxyphosphooctonate aldolase (284 aa).

It belongs to the KdsA family.

Its subcellular location is the cytoplasm. The enzyme catalyses D-arabinose 5-phosphate + phosphoenolpyruvate + H2O = 3-deoxy-alpha-D-manno-2-octulosonate-8-phosphate + phosphate. The protein operates within carbohydrate biosynthesis; 3-deoxy-D-manno-octulosonate biosynthesis; 3-deoxy-D-manno-octulosonate from D-ribulose 5-phosphate: step 2/3. Its pathway is bacterial outer membrane biogenesis; lipopolysaccharide biosynthesis. The protein is 2-dehydro-3-deoxyphosphooctonate aldolase of Histophilus somni (strain 129Pt) (Haemophilus somnus).